Here is a 343-residue protein sequence, read N- to C-terminus: GTPase Obg (343 aa).

The Obg domain occupies 1 to 159; the sequence is MKFLDQAKVY…LNIWLRLKLI (159 aa). The OBG-type G domain occupies 160 to 327; the sequence is ADAGLVGLPN…VLRALMTVIA (168 aa). Residues 166 to 173, 191 to 195, 212 to 215, 279 to 282, and 308 to 310 contribute to the GTP site; these read GLPNAGKS, FTTLH, DIPG, SQVD, and SAV. Mg(2+)-binding residues include Ser-173 and Thr-193.

This sequence belongs to the TRAFAC class OBG-HflX-like GTPase superfamily. OBG GTPase family. In terms of assembly, monomer. Mg(2+) serves as cofactor.

Its subcellular location is the cytoplasm. An essential GTPase which binds GTP, GDP and possibly (p)ppGpp with moderate affinity, with high nucleotide exchange rates and a fairly low GTP hydrolysis rate. Plays a role in control of the cell cycle, stress response, ribosome biogenesis and in those bacteria that undergo differentiation, in morphogenesis control. The chain is GTPase Obg from Mesorhizobium japonicum (strain LMG 29417 / CECT 9101 / MAFF 303099) (Mesorhizobium loti (strain MAFF 303099)).